The primary structure comprises 342 residues: MKLLSLTGVAGVLATCVAATPLVKRLPSGSDPAFSQPKSVLDAGLTCQGASPSSVSKPILLVPGTGTTGPQSFDSNWIPLSTQLGYTPCWISPPPFMLNDTQVNTEYMVNAITALYAGSGNNKLPVLTWSQGGLVAQWGLTFFPSIRSKVDRLMAFAPDYKGTVLAGPLDALAVSAPSVWQQTTGSALTTALRNAGGLTQIVPTTNLYSATDEIVQPQVSNSPLDSSYLFNGKNVQAQAVCGPLFVIDHAGSLTSQFSYVVGRSALRSTTGQARSADYGITDCNPLPANDLTPEQKVAAAALLAPAAAAIVAGPKQNCEPDLMPYARPFAVGKRTCSGIVTP.

The signal sequence occupies residues M1 to A18. Residues A19–R25 constitute a propeptide that is removed on maturation. An intrachain disulfide couples C47 to C89. The N-linked (GlcNAc...) asparagine glycan is linked to N99. Catalysis depends on residues S130, D212, and H249. 2 disulfide bridges follow: C241–C283 and C318–C336.

The enzyme catalyses a triacylglycerol + H2O = a diacylglycerol + a fatty acid + H(+). In terms of biological role, hydrolysis of triglycerides. Is very stereospecific both in hydrolysis and in organic synthesis and has a potentially important application in glucolipid synthesis. The sequence is that of Lipase B from Pseudozyma antarctica (Yeast).